The primary structure comprises 720 residues: Inactive serine protease PAMR1 (720 aa).

An N-terminal signal peptide occupies residues 1–21 (MELGCWTQLGLTFLQLLLISS). 9 disulfides stabilise this stretch: Cys-128–Cys-150, Cys-177–Cys-199, Cys-239–Cys-250, Cys-244–Cys-260, Cys-262–Cys-271, Cys-280–Cys-329, Cys-315–Cys-342, Cys-414–Cys-442, and Cys-489–Cys-505. In terms of domain architecture, CUB spans 128–236 (CGQVLRAPKG…DGFHAIYEEI (109 aa)). The region spanning 235–272 (EITACSSSPCFHDGTCVLDKAGSYKCACLAGYTGQRCE) is the EGF-like domain. 2 Sushi domains span residues 278 to 344 (RNCS…ICIK) and 387 to 444 (APTK…SCIP). A Peptidase S1 domain is found at 445-720 (ICGKIENITA…FKDWIERNMK (276 aa)). Residue Asn-614 is glycosylated (N-linked (GlcNAc...) asparagine). Intrachain disulfides connect Cys-630–Cys-649 and Cys-661–Cys-697.

Belongs to the peptidase S1 family.

It localises to the secreted. In terms of biological role, may play a role in regeneration of skeletal muscle. The protein is Inactive serine protease PAMR1 (PAMR1) of Homo sapiens (Human).